We begin with the raw amino-acid sequence, 182 residues long: uncharacterized protein (182 aa).

A Nudix hydrolase domain is found at 36–164; that stretch reads LRHRATYIVV…TPDSLKALSL (129 aa). Positions 73-95 match the Nudix box motif; it reads GGVVQSGENYLESARREAEEELG. Mg(2+) is bound by residues Glu-89 and Glu-93.

Belongs to the Nudix hydrolase family. Requires Mg(2+) as cofactor.

This is an uncharacterized protein from Yersinia pestis.